We begin with the raw amino-acid sequence, 250 residues long: GILT-like protein 1 (250 aa).

An N-terminal signal peptide occupies residues 1-21; that stretch reads MSHKIAAVCLLMSCLIATAYS. N157 is a glycosylation site (N-linked (GlcNAc...) asparagine).

It belongs to the GILT family. In terms of processing, conjugated to URM1, a ubiquitin-like protein.

It is found in the secreted. In terms of biological role, involved in the immune response to bacterial infection. In Drosophila melanogaster (Fruit fly), this protein is GILT-like protein 1.